Reading from the N-terminus, the 598-residue chain is Nuclear receptor subfamily 4 group A member 2 (598 aa).

Residues 1 to 22 form a disordered region; the sequence is MPCVQAQYGSSPQGASPASQSY. Residues 8-22 are compositionally biased toward low complexity; sequence YGSSPQGASPASQSY. The segment at residues 260-335 is a DNA-binding region (nuclear receptor); that stretch reads EGLCAVCGDN…VGMVKEVVRT (76 aa). 2 consecutive NR C4-type zinc fingers follow at residues 263–283 and 299–323; these read CAVC…CEGC and CLAN…FQKC. Residues 287–314 carry the Bipartite nuclear localization signal (NLS1) motif; the sequence is FKRTVQKNAKYVCLANKNCPVDKRRRNR. The interval 337–361 is disordered; sequence SLKGRRGRLPSKPKSPQDPSPPSPP. The Nuclear localization signal (NLS1) signature appears at 338–350; it reads LKGRRGRLPSKPK. Over residues 352–361 the composition is skewed to pro residues; that stretch reads PQDPSPPSPP. The NR LBD domain maps to 360-595; that stretch reads PPVSLISALV…AIIDKLFLDT (236 aa). The nuclear export sequence (NES1) motif lies at 443–452; sequence FLELFVLRLA. Residues 568–577 carry the nuclear export sequence (NES2) motif; sequence QGLQRIFYLK.

This sequence belongs to the nuclear hormone receptor family. NR4 subfamily. Interacts with SFPQ, NCOR2, SIN3A and HADC1. The interaction with NCOR2 increases in the absence of PITX3. Interacts with PER2. In terms of tissue distribution, shows a ubiquitous distribution in the cerebral cortex, hippocampus, thalamus, amygdala, and midbrain. Expression increases in prenatally stressed adult offspring in the ventral tegmental area, whereas no changes are observed in the substantia nigra area (at protein level). Not expressed in quiescent liver but is rapidly induced following partial hepatectomy and is specific to hepatic growth as it is not induced in other mitogen-treated cells. Expressed at very low levels in the lung, spleen and stomach and at high levels in the brain.

It is found in the cytoplasm. The protein resides in the nucleus. In terms of biological role, transcriptional regulator which is important for the differentiation and maintenance of meso-diencephalic dopaminergic (mdDA) neurons during development. It is crucial for expression of a set of genes such as SLC6A3, SLC18A2, TH and DRD2 which are essential for development of mdDA neurons. May confer liver-specific regulation of delayed-early genes induced later in the G1 phase of regeneration along with NR4A1. This Rattus norvegicus (Rat) protein is Nuclear receptor subfamily 4 group A member 2 (Nr4a2).